The following is a 501-amino-acid chain: Lysine--tRNA ligase (501 aa).

The Mg(2+) site is built by Glu402 and Glu409.

This sequence belongs to the class-II aminoacyl-tRNA synthetase family. As to quaternary structure, homodimer. Mg(2+) is required as a cofactor.

It is found in the cytoplasm. It catalyses the reaction tRNA(Lys) + L-lysine + ATP = L-lysyl-tRNA(Lys) + AMP + diphosphate. The sequence is that of Lysine--tRNA ligase from Helicobacter pylori (strain P12).